Reading from the N-terminus, the 167-residue chain is Ribosome maturation factor RimM (167 aa).

The 73-residue stretch at 94-166 (TGRAYLHELI…YMVVPRFDEF (73 aa)) folds into the PRC barrel domain.

This sequence belongs to the RimM family. Binds ribosomal protein uS19.

The protein localises to the cytoplasm. In terms of biological role, an accessory protein needed during the final step in the assembly of 30S ribosomal subunit, possibly for assembly of the head region. Essential for efficient processing of 16S rRNA. May be needed both before and after RbfA during the maturation of 16S rRNA. It has affinity for free ribosomal 30S subunits but not for 70S ribosomes. This Chlorobium phaeobacteroides (strain DSM 266 / SMG 266 / 2430) protein is Ribosome maturation factor RimM.